The sequence spans 509 residues: GRAS family protein RAD1 (509 aa).

The region spanning 125-508 (EDGCADGMRL…KPIVAASCWK (384 aa)) is the GRAS domain. The tract at residues 132–198 (MRLVQLLIAC…IQPIGSGAGV (67 aa)) is leucine repeat I (LRI). Residues 217–286 (YRLVYETCPH…SGHGRVRRLR (70 aa)) form a VHIID region. The VHIID signature appears at 248–252 (VHVVD). The leucine repeat II (LRII) stretch occupies residues 299 to 331 (AIGDELSDYANNLGINLEFSVVQKNLENLQPED). Residues 340–431 (LVVNSILQLH…QFYFAEEIKN (92 aa)) are PFYRE. The segment at 434-508 (SCEGPLRMER…KPIVAASCWK (75 aa)) is SAW.

Belongs to the GRAS family. Interacts with RAM1 and NSP2. As to expression, expressed in roots under low phosphate (Pi) conditions.

The protein localises to the nucleus. Functionally, transcription factor acting as a regulator of arbuscular mycorrhiza (AM)-related genes (e.g. PT4, STR and RAM2). Required for the morphogenesis of arbuscules upon symbiosis with AM fungi (e.g. Rhizophagus irregularis). Also involved in restricting mycorrhizal colonization of the root meristem. The chain is GRAS family protein RAD1 from Lotus japonicus (Lotus corniculatus var. japonicus).